The following is a 205-amino-acid chain: Adenylyl-sulfate kinase (205 aa).

ATP is bound at residue 31–38 (GLSGAGKS). Residue serine 105 is the Phosphoserine intermediate of the active site.

It belongs to the APS kinase family.

It carries out the reaction adenosine 5'-phosphosulfate + ATP = 3'-phosphoadenylyl sulfate + ADP + H(+). Its pathway is sulfur metabolism; hydrogen sulfide biosynthesis; sulfite from sulfate: step 2/3. In terms of biological role, catalyzes the synthesis of activated sulfate. The chain is Adenylyl-sulfate kinase from Shewanella sp. (strain ANA-3).